Here is a 311-residue protein sequence, read N- to C-terminus: Aspartate carbamoyltransferase catalytic subunit (311 aa).

Positions 55 and 56 each coordinate carbamoyl phosphate. Residue lysine 85 coordinates L-aspartate. Carbamoyl phosphate is bound by residues arginine 106, histidine 135, and glutamine 138. L-aspartate is bound by residues arginine 168 and arginine 230. Positions 268 and 269 each coordinate carbamoyl phosphate.

It belongs to the aspartate/ornithine carbamoyltransferase superfamily. ATCase family. Heterododecamer (2C3:3R2) of six catalytic PyrB chains organized as two trimers (C3), and six regulatory PyrI chains organized as three dimers (R2).

The enzyme catalyses carbamoyl phosphate + L-aspartate = N-carbamoyl-L-aspartate + phosphate + H(+). It functions in the pathway pyrimidine metabolism; UMP biosynthesis via de novo pathway; (S)-dihydroorotate from bicarbonate: step 2/3. In terms of biological role, catalyzes the condensation of carbamoyl phosphate and aspartate to form carbamoyl aspartate and inorganic phosphate, the committed step in the de novo pyrimidine nucleotide biosynthesis pathway. This Yersinia pseudotuberculosis serotype O:1b (strain IP 31758) protein is Aspartate carbamoyltransferase catalytic subunit.